Here is a 114-residue protein sequence, read N- to C-terminus: uncharacterized protein (114 aa).

Basic residues predominate over residues 18–29; the sequence is TRKRNSHKKVTK. Disordered stretches follow at residues 18–47 and 65–108; these read TRKR…RRTG and SRPR…KLLN. Basic and acidic residues predominate over residues 30-41; it reads RAVEKRKQDSTR.

This is an uncharacterized protein from Homo sapiens (Human).